The chain runs to 221 residues: Chaperone protein TorD (221 aa).

Belongs to the TorD/DmsD family. TorD subfamily.

It localises to the cytoplasm. Its function is as follows. Involved in the biogenesis of TorA. Acts on TorA before the insertion of the molybdenum cofactor and, as a result, probably favors a conformation of the apoenzyme that is competent for acquiring the cofactor. The sequence is that of Chaperone protein TorD from Psychrobacter sp. (strain PRwf-1).